Reading from the N-terminus, the 204-residue chain is Recombination protein RecR (204 aa).

The C4-type zinc finger occupies 58–75; the sequence is CSVCQNVTDREEDPCSIC. Residues 83–181 form the Toprim domain; that stretch reads TVICVVESPV…EVTKIARGIP (99 aa).

The protein belongs to the RecR family.

Its function is as follows. May play a role in DNA repair. It seems to be involved in an RecBC-independent recombinational process of DNA repair. It may act with RecF and RecO. In Chlorobium luteolum (strain DSM 273 / BCRC 81028 / 2530) (Pelodictyon luteolum), this protein is Recombination protein RecR.